Here is a 1192-residue protein sequence, read N- to C-terminus: Methionine synthase (1192 aa).

The Hcy-binding domain occupies 1–312 (MTAADKHLYD…AHIREVAAAV (312 aa)). Positions 231, 297, and 298 each coordinate Zn(2+). Residues 343-601 (VLVIGERTNA…RIPEEQRNVA (259 aa)) enclose the Pterin-binding domain. The region spanning 635-728 (RLAELAGLPL…HMERSDDDSG (94 aa)) is the B12-binding N-terminal domain. The B12-binding domain occupies 729–866 (KGRIVLATVK…SAKRGEAPDE (138 aa)). Methylcob(III)alamin-binding positions include 739–743 (GDVHD), H742, S787, and A845. The interval 860–904 (RGEAPDENSPEAIKAREKEAERKARHQRSKRIAAQRKAAEEPVEV) is disordered. Residues 872-881 (IKAREKEAER) are compositionally biased toward basic and acidic residues. The segment covering 882-893 (KARHQRSKRIAA) has biased composition (basic residues). Residues 893–1192 (AQRKAAEEPV…HHPEAKYFNV (300 aa)) enclose the AdoMet activation domain. S-adenosyl-L-methionine is bound by residues D940, R1135, and 1189-1190 (YF).

The protein belongs to the vitamin-B12 dependent methionine synthase family. Methylcob(III)alamin serves as cofactor. It depends on Zn(2+) as a cofactor.

It carries out the reaction (6S)-5-methyl-5,6,7,8-tetrahydrofolate + L-homocysteine = (6S)-5,6,7,8-tetrahydrofolate + L-methionine. It functions in the pathway amino-acid biosynthesis; L-methionine biosynthesis via de novo pathway; L-methionine from L-homocysteine (MetH route): step 1/1. In terms of biological role, catalyzes the transfer of a methyl group from methyl-cobalamin to homocysteine, yielding enzyme-bound cob(I)alamin and methionine. Subsequently, remethylates the cofactor using methyltetrahydrofolate. This chain is Methionine synthase (metH), found in Mycobacterium tuberculosis (strain ATCC 25618 / H37Rv).